A 159-amino-acid polypeptide reads, in one-letter code: Ribosomal RNA large subunit methyltransferase H (159 aa).

S-adenosyl-L-methionine contacts are provided by residues leucine 76, glycine 108, and 127-132 (FSKMTF).

The protein belongs to the RNA methyltransferase RlmH family. Homodimer.

Its subcellular location is the cytoplasm. The catalysed reaction is pseudouridine(1915) in 23S rRNA + S-adenosyl-L-methionine = N(3)-methylpseudouridine(1915) in 23S rRNA + S-adenosyl-L-homocysteine + H(+). Specifically methylates the pseudouridine at position 1915 (m3Psi1915) in 23S rRNA. The sequence is that of Ribosomal RNA large subunit methyltransferase H from Exiguobacterium sibiricum (strain DSM 17290 / CCUG 55495 / CIP 109462 / JCM 13490 / 255-15).